A 360-amino-acid chain; its full sequence is Peptide chain release factor 1 (360 aa).

Gln-234 is subject to N5-methylglutamine.

Belongs to the prokaryotic/mitochondrial release factor family. In terms of processing, methylated by PrmC. Methylation increases the termination efficiency of RF1.

The protein localises to the cytoplasm. In terms of biological role, peptide chain release factor 1 directs the termination of translation in response to the peptide chain termination codons UAG and UAA. The protein is Peptide chain release factor 1 of Clostridium botulinum (strain Eklund 17B / Type B).